A 135-amino-acid chain; its full sequence is ATP synthase epsilon chain, chloroplastic (135 aa).

It belongs to the ATPase epsilon chain family. F-type ATPases have 2 components, CF(1) - the catalytic core - and CF(0) - the membrane proton channel. CF(1) has five subunits: alpha(3), beta(3), gamma(1), delta(1), epsilon(1). CF(0) has three main subunits: a, b and c.

The protein resides in the plastid. Its subcellular location is the chloroplast thylakoid membrane. In terms of biological role, produces ATP from ADP in the presence of a proton gradient across the membrane. The sequence is that of ATP synthase epsilon chain, chloroplastic from Marchantia polymorpha (Common liverwort).